The primary structure comprises 385 residues: DNA replication and repair protein RecF (385 aa).

An ATP-binding site is contributed by 30-37; the sequence is GSNGFGKT.

Belongs to the RecF family.

The protein localises to the cytoplasm. Functionally, the RecF protein is involved in DNA metabolism; it is required for DNA replication and normal SOS inducibility. RecF binds preferentially to single-stranded, linear DNA. It also seems to bind ATP. This Mycobacterium avium (strain 104) protein is DNA replication and repair protein RecF.